The following is a 247-amino-acid chain: 6-carboxyhexanoate--CoA ligase (247 aa).

The protein belongs to the BioW family. As to quaternary structure, homodimer. Requires Mg(2+) as cofactor.

The catalysed reaction is heptanedioate + ATP + CoA = 6-carboxyhexanoyl-CoA + AMP + diphosphate. It functions in the pathway metabolic intermediate metabolism; pimeloyl-CoA biosynthesis; pimeloyl-CoA from pimelate: step 1/1. Its function is as follows. Catalyzes the transformation of pimelate into pimeloyl-CoA with concomitant hydrolysis of ATP to AMP. In Corynebacterium diphtheriae (strain ATCC 700971 / NCTC 13129 / Biotype gravis), this protein is 6-carboxyhexanoate--CoA ligase.